The primary structure comprises 525 residues: GMP synthase [glutamine-hydrolyzing] (525 aa).

One can recognise a Glutamine amidotransferase type-1 domain in the interval 9–207 (RILILDFGSQ…VLDICQCEAL (199 aa)). The active-site Nucleophile is cysteine 86. Residues histidine 181 and glutamate 183 contribute to the active site. The 193-residue stretch at 208–400 (WTPAKIIDDA…LGLPYNMLYR (193 aa)) folds into the GMPS ATP-PPase domain. 235-241 (SGGVDSS) is a binding site for ATP.

Homodimer.

It catalyses the reaction XMP + L-glutamine + ATP + H2O = GMP + L-glutamate + AMP + diphosphate + 2 H(+). Its pathway is purine metabolism; GMP biosynthesis; GMP from XMP (L-Gln route): step 1/1. In terms of biological role, catalyzes the synthesis of GMP from XMP. The polypeptide is GMP synthase [glutamine-hydrolyzing] (Pectobacterium atrosepticum (strain SCRI 1043 / ATCC BAA-672) (Erwinia carotovora subsp. atroseptica)).